A 549-amino-acid polypeptide reads, in one-letter code: Glucose-6-phosphate isomerase (549 aa).

Residue E355 is the Proton donor of the active site. Active-site residues include H386 and K514.

Belongs to the GPI family.

It localises to the cytoplasm. It carries out the reaction alpha-D-glucose 6-phosphate = beta-D-fructose 6-phosphate. Its pathway is carbohydrate biosynthesis; gluconeogenesis. The protein operates within carbohydrate degradation; glycolysis; D-glyceraldehyde 3-phosphate and glycerone phosphate from D-glucose: step 2/4. Catalyzes the reversible isomerization of glucose-6-phosphate to fructose-6-phosphate. This chain is Glucose-6-phosphate isomerase, found in Salmonella arizonae (strain ATCC BAA-731 / CDC346-86 / RSK2980).